We begin with the raw amino-acid sequence, 31 residues long: Conotoxin Cltx-2 (31 aa).

2 positions are modified to 4-hydroxyproline: Pro-6 and Pro-31.

Contains 4 disulfide bonds. In terms of tissue distribution, expressed by the venom duct.

The protein localises to the secreted. The protein is Conotoxin Cltx-2 of Californiconus californicus (California cone).